The sequence spans 185 residues: ATP synthase subunit b, chloroplastic (185 aa).

The helical transmembrane segment at 27-49 (LATNPINLSVVLGVLIFFGKGVL) threads the bilayer.

Belongs to the ATPase B chain family. In terms of assembly, F-type ATPases have 2 components, F(1) - the catalytic core - and F(0) - the membrane proton channel. F(1) has five subunits: alpha(3), beta(3), gamma(1), delta(1), epsilon(1). F(0) has four main subunits: a(1), b(1), b'(1) and c(10-14). The alpha and beta chains form an alternating ring which encloses part of the gamma chain. F(1) is attached to F(0) by a central stalk formed by the gamma and epsilon chains, while a peripheral stalk is formed by the delta, b and b' chains.

It localises to the plastid. It is found in the chloroplast thylakoid membrane. In terms of biological role, f(1)F(0) ATP synthase produces ATP from ADP in the presence of a proton or sodium gradient. F-type ATPases consist of two structural domains, F(1) containing the extramembraneous catalytic core and F(0) containing the membrane proton channel, linked together by a central stalk and a peripheral stalk. During catalysis, ATP synthesis in the catalytic domain of F(1) is coupled via a rotary mechanism of the central stalk subunits to proton translocation. Functionally, component of the F(0) channel, it forms part of the peripheral stalk, linking F(1) to F(0). This chain is ATP synthase subunit b, chloroplastic, found in Vitis vinifera (Grape).